The primary structure comprises 347 residues: S-adenosylmethionine:tRNA ribosyltransferase-isomerase (347 aa).

The protein belongs to the QueA family. In terms of assembly, monomer.

The protein localises to the cytoplasm. The enzyme catalyses 7-aminomethyl-7-carbaguanosine(34) in tRNA + S-adenosyl-L-methionine = epoxyqueuosine(34) in tRNA + adenine + L-methionine + 2 H(+). The protein operates within tRNA modification; tRNA-queuosine biosynthesis. In terms of biological role, transfers and isomerizes the ribose moiety from AdoMet to the 7-aminomethyl group of 7-deazaguanine (preQ1-tRNA) to give epoxyqueuosine (oQ-tRNA). The protein is S-adenosylmethionine:tRNA ribosyltransferase-isomerase of Xylella fastidiosa (strain M12).